The primary structure comprises 322 residues: RNA-binding protein KhpB (322 aa).

Residues 3–52 (VFEGNTVAAAIAAGLKQLHRTRDQVEVEVIAEAKKGFLGLGKHPAQVRLT) form a jag_N domain region. The segment covering 58 to 82 (AAPATTPTSATATAQQSVATESTTA) has biased composition (low complexity). The segment at 58–162 (AAPATTPTSA…AADQSQTPRT (105 aa)) is disordered. Position 89 is a phosphothreonine (threonine 89). Residues 89 to 99 (TVQTPKSTPTR) are compositionally biased toward polar residues. Over residues 100 to 129 (QAKTSQATTSAAKPATSKAKAVAKPASMAV) the composition is skewed to low complexity. Residues 141-161 (SKPATTSKTKSVAADQSQTPR) are compositionally biased toward polar residues. Positions 174–251 (ETAVRALCDY…ASHVNVVLDV (78 aa)) constitute a KH domain. Residues 256 to 322 (ERRAATLKRL…HRAVVVAIRK (67 aa)) enclose the R3H domain.

As to quaternary structure, forms a complex with KhpA.

It localises to the cytoplasm. In terms of biological role, a probable RNA chaperone. Forms a complex with KhpA which binds to cellular RNA and controls its expression. Plays a role in peptidoglycan (PG) homeostasis and cell length regulation. Functionally, necessary for correct cell elongation. This Lactiplantibacillus plantarum (strain ATCC BAA-793 / NCIMB 8826 / WCFS1) (Lactobacillus plantarum) protein is RNA-binding protein KhpB.